Consider the following 555-residue polypeptide: Formate--tetrahydrofolate ligase (555 aa).

65–72 (TPAGEGKS) contributes to the ATP binding site.

It belongs to the formate--tetrahydrofolate ligase family.

The catalysed reaction is (6S)-5,6,7,8-tetrahydrofolate + formate + ATP = (6R)-10-formyltetrahydrofolate + ADP + phosphate. Its pathway is one-carbon metabolism; tetrahydrofolate interconversion. This Staphylococcus aureus (strain Mu3 / ATCC 700698) protein is Formate--tetrahydrofolate ligase.